We begin with the raw amino-acid sequence, 38 residues long: GVIINVKCKISRQCLEPCKKAGMRFGKCMNGKCHCTPK.

3 disulfide bridges follow: Cys8/Cys28, Cys14/Cys33, and Cys18/Cys35.

This sequence belongs to the short scorpion toxin superfamily. Potassium channel inhibitor family. Alpha-KTx 03 subfamily. Expressed by the venom gland.

The protein localises to the secreted. Blocks voltage-gated potassium channels Kv1.1/KCNA1 (IC(50)=0.6 nM), Kv1.2/KCNA2 (IC(50)=5.4 nM), Kv1.3/KCNA3 (IC(50)=0.014 nM) potently, and moderately block intermediate conductance calcium-activated potassium channels KCa3.1/KCNN4 (IC(50)=225 nM). Also shows activity on muscle-type nicotinic acetylcholine receptor (nAChR), since it reversibly and dose-dependently inhibits acetylcholine-induced current through mouse muscle-type nAChR heterologously expressed in Xenopus oocytes (IC(50)=1.6 uM). In Orthochirus scrobiculosus (Central Asian scorpion), this protein is Potassium channel toxin alpha-KTx 3.7.